The chain runs to 412 residues: MEFLKKVDPDIFGLIEEEDQRQRRNIELIASENFVSDAVMEAAGSCLTNKYAEGYPHKRYYGGCEVVDKVEELAIARARELFGAEHVNVQPHSGSQANQAVYFATVPPGGTILAMDLTHGGHLTHGSPVNMSGKYYNFIHYGVTREEEVIDFDQVRELARKHQPDLIVAGASAYPRIIDFEVFREIADEVGALFMVDMAHIAGLVAAGLHPSPVPVADFVTTTTHKTLRGTRGGLILCKGEHAKKIDKAIFPGLQGGPLLHIIAAKAVTFKEALQDEFKGYQKQIVSNAKTMAAELKNYGFRLVSGGTDNHLMLVDLTNMDITGKDAETALDKVGITVNKNTIPFEKRSPFVTSGIRIGTPAVTTRGMKEKEMKLIAKLIYQTLKNINDEGRLTEIRQEVYRLSERFPKTAE.

(6S)-5,6,7,8-tetrahydrofolate is bound by residues L117 and 121-123 (GHL). K226 is subject to N6-(pyridoxal phosphate)lysine. Residue 349–351 (SPF) participates in (6S)-5,6,7,8-tetrahydrofolate binding.

It belongs to the SHMT family. In terms of assembly, homodimer. Requires pyridoxal 5'-phosphate as cofactor.

It is found in the cytoplasm. It carries out the reaction (6R)-5,10-methylene-5,6,7,8-tetrahydrofolate + glycine + H2O = (6S)-5,6,7,8-tetrahydrofolate + L-serine. The protein operates within one-carbon metabolism; tetrahydrofolate interconversion. Its pathway is amino-acid biosynthesis; glycine biosynthesis; glycine from L-serine: step 1/1. Its function is as follows. Catalyzes the reversible interconversion of serine and glycine with tetrahydrofolate (THF) serving as the one-carbon carrier. This reaction serves as the major source of one-carbon groups required for the biosynthesis of purines, thymidylate, methionine, and other important biomolecules. Also exhibits THF-independent aldolase activity toward beta-hydroxyamino acids, producing glycine and aldehydes, via a retro-aldol mechanism. This Halothermothrix orenii (strain H 168 / OCM 544 / DSM 9562) protein is Serine hydroxymethyltransferase.